Consider the following 275-residue polypeptide: Voltage-dependent calcium channel gamma-7 subunit (275 aa).

Transmembrane regions (helical) follow at residues 8-28, 103-123, 129-149, and 179-199; these read ALTLLSSVFGACGLLLVGIAV, FPMVSLFLVFTAFVISNIGHI, ILAFVSGIFFILSGLSLVVGL, and FAFAASSFLLKEGAGVMSVYL. Phosphoserine occurs at positions 222, 225, and 273.

This sequence belongs to the PMP-22/EMP/MP20 family. CACNG subfamily. As to quaternary structure, interacts with CACNA1C. Identified in a complex with the L-type calcium channel subunits CACNA1C, CACNA2D1 and either CACNB1 or CACNB2. Acts as an auxiliary subunit for AMPA-selective glutamate receptors (AMPARs), such as GRIA1 and GRIA2. Detected in heart left ventricle. Widely expressed.

The protein localises to the cell membrane. In terms of biological role, regulates the activity of L-type calcium channels that contain CACNA1C as pore-forming subunit. Regulates the trafficking and gating properties of AMPA-selective glutamate receptors (AMPARs). Promotes their targeting to the cell membrane and synapses and modulates their gating properties by slowing their rates of activation, deactivation and desensitization and by mediating their resensitization. Displays subunit-specific AMPA receptor regulation. Shows specificity only for GRIA1 and GRIA2. This Homo sapiens (Human) protein is Voltage-dependent calcium channel gamma-7 subunit (CACNG7).